The primary structure comprises 1079 residues: Capping protein inhibiting regulator of actin dynamics (1079 aa).

Residues 1–11 (MSQENVSDKVR) are compositionally biased toward basic and acidic residues. Disordered stretches follow at residues 1–293 (MSQE…EEER), 308–327 (ERKR…AEKR), 341–383 (EHRI…EWKR), 420–453 (PVTP…PTLS), 493–522 (EGKK…VFES), 606–639 (IFGQ…VQSR), and 658–1054 (PSFL…TTQV). Over residues 36–45 (DEGSSDEEEV) the composition is skewed to acidic residues. Positions 64–76 (SAKEKSVSHDTVQ) are enriched in basic and acidic residues. The segment covering 115–134 (AKHKLSVKPKNQRVSRKHRR) has biased composition (basic residues). A compositionally biased stretch (acidic residues) spans 140 to 158 (HEDDFSEIQEEFEKDEEVF). Positions 159 to 293 (DSSREDYGII…EERKRAEEER (135 aa)) are enriched in basic and acidic residues. Positions 420–434 (PVTPATGQQGETTAE) are enriched in polar residues. Residues 670 to 682 (PKSQRSESGSPIQ) are compositionally biased toward polar residues. Over residues 684-695 (ESEDSDTKDEDG) the composition is skewed to acidic residues. A compositionally biased stretch (polar residues) spans 756–781 (DNSTLSEKSSPISPQQENIEFQTTVA). Composition is skewed to basic and acidic residues over residues 896 to 930 (WREK…DKET) and 944 to 983 (GFRE…EDKG). Polar residues predominate over residues 984–993 (NGSSSIISKH). Over residues 994–1016 (QTADENKRPDTLLARFERRDNLK) the composition is skewed to basic and acidic residues. A compositionally biased stretch (polar residues) spans 1020 to 1033 (TLPSSVTVEITDST).

Directly interacts with actin-capping proteins; this interaction decreases the binding of capping proteins to actin.

It localises to the cytoplasm. The protein localises to the cytosol. Involved in epithelial cell integrity by acting on the maintenance of the actin cytoskeleton. Positively regulates the actin polymerization, by inhibiting the interaction of actin-capping proteins with actin. The protein is Capping protein inhibiting regulator of actin dynamics (crad) of Danio rerio (Zebrafish).